The sequence spans 334 residues: UDP-N-acetylglucosamine--N-acetylmuramyl-(pentapeptide) pyrophosphoryl-undecaprenol N-acetylglucosamine transferase (334 aa).

UDP-N-acetyl-alpha-D-glucosamine-binding positions include 11 to 13 (TGG), asparagine 125, serine 185, isoleucine 229, and glutamine 274.

It belongs to the glycosyltransferase 28 family. MurG subfamily.

It localises to the cell inner membrane. It catalyses the reaction di-trans,octa-cis-undecaprenyl diphospho-N-acetyl-alpha-D-muramoyl-L-alanyl-D-glutamyl-meso-2,6-diaminopimeloyl-D-alanyl-D-alanine + UDP-N-acetyl-alpha-D-glucosamine = di-trans,octa-cis-undecaprenyl diphospho-[N-acetyl-alpha-D-glucosaminyl-(1-&gt;4)]-N-acetyl-alpha-D-muramoyl-L-alanyl-D-glutamyl-meso-2,6-diaminopimeloyl-D-alanyl-D-alanine + UDP + H(+). Its pathway is cell wall biogenesis; peptidoglycan biosynthesis. Its function is as follows. Cell wall formation. Catalyzes the transfer of a GlcNAc subunit on undecaprenyl-pyrophosphoryl-MurNAc-pentapeptide (lipid intermediate I) to form undecaprenyl-pyrophosphoryl-MurNAc-(pentapeptide)GlcNAc (lipid intermediate II). This chain is UDP-N-acetylglucosamine--N-acetylmuramyl-(pentapeptide) pyrophosphoryl-undecaprenol N-acetylglucosamine transferase, found in Thermosipho africanus (strain TCF52B).